Here is a 402-residue protein sequence, read N- to C-terminus: Arginine deiminase (402 aa).

Cys392 (amidino-cysteine intermediate) is an active-site residue.

The protein belongs to the arginine deiminase family.

It is found in the cytoplasm. The enzyme catalyses L-arginine + H2O = L-citrulline + NH4(+). The protein operates within amino-acid degradation; L-arginine degradation via ADI pathway; carbamoyl phosphate from L-arginine: step 1/2. This is Arginine deiminase (arcA) from Mycobacterium bovis (strain ATCC BAA-935 / AF2122/97).